Consider the following 186-residue polypeptide: Cysteine protease inhibitor 10 (186 aa).

The signal sequence occupies residues 1–7 (TCHDDDN). Cystine bridges form between Cys49–Cys101 and Cys149–Cys155.

This sequence belongs to the protease inhibitor I3 (leguminous Kunitz-type inhibitor) family.

It localises to the vacuole. Probable inhibitor of cysteine proteases. May protect the plant by inhibiting proteases of invading organisms. The protein is Cysteine protease inhibitor 10 of Solanum tuberosum (Potato).